We begin with the raw amino-acid sequence, 441 residues long: C-terminal-binding protein 1 (441 aa).

An interaction with GLIS2 1 region spans residues 1–70; it reads MGSSHLLNKG…EIHEKVLNEA (70 aa). NAD(+) is bound by residues serine 100, 180–185, aspartate 204, 237–243, 264–266, and aspartate 290; these read IGLGRV, CGLNEHN, and TAR. Arginine 266 is a catalytic residue. Residues 288-360 are interaction with GLIS2 2; it reads ALDVHESEPF…VNKDHLTAAT (73 aa). Glutamate 295 is a catalytic residue. A Phosphoserine modification is found at serine 300. Histidine 315 serves as the catalytic Proton donor. 315 to 318 provides a ligand contact to NAD(+); it reads HAAW. Residues 409 to 441 are disordered; that stretch reads SHGLPPVAHPPHAPSPGQTVKPEADRDHTSDQL. Phosphoserine is present on serine 423. Lysine 429 participates in a covalent cross-link: Glycyl lysine isopeptide (Lys-Gly) (interchain with G-Cter in SUMO). Residues 430–441 show a composition bias toward basic and acidic residues; the sequence is PEADRDHTSDQL.

The protein belongs to the D-isomer specific 2-hydroxyacid dehydrogenase family. As to quaternary structure, homo- or heterodimer. Heterodimer with CTBP2. Interacts with ELK3 (via its PXDLS motif). Interacts with RBBP8 (via its PXDLS motif). Interacts with PNN, MECOM and ZFHX1B. Interacts with ZNF366 (via PXDLS motif). Interaction with SATB1 (non-acetylated form); the interaction stabilizes its attachment to DNA and promotes transcription repression. Interacts with PRDM16; the interaction represses white adipose tissue (WAT)-specific genes expression. Interacts with GLIS2, HIPK2, FOXP1, FOXP2, HDAC4, HDAC5, HDAC9, NRIP1, WIZ and ZNF217. Interacts with BCL6; the interaction is required for BCL6 transcriptional autoinhibition and inhibition of some BCL6 target genes. Interacts with IKZF4. Interacts with MCRIP1 (unphosphorylated form, via the PXDLS motif); competitively inhibiting CTBP-ZEB1 interaction. Interacts with Bassoon/BSN; this interaction targets and anchors CTBP1 to presynapses. Interacts with SIMC1. NAD(+) is required as a cofactor. In terms of processing, ADP-ribosylated; when cells are exposed to brefeldin A. The level of phosphorylation appears to be regulated during the cell cycle. Phosphorylation by HIPK2 on Ser-423 induces proteasomal degradation. Post-translationally, sumoylation on Lys-429 is promoted by the E3 SUMO-protein ligase CBX4. Expressed in a wide range of adult tissues.

The protein resides in the cytoplasm. The protein localises to the nucleus. In terms of biological role, corepressor targeting diverse transcription regulators such as GLIS2 or BCL6. Has dehydrogenase activity. Involved in controlling the equilibrium between tubular and stacked structures in the Golgi complex. Functions in brown adipose tissue (BAT) differentiation. This Mus musculus (Mouse) protein is C-terminal-binding protein 1 (Ctbp1).